A 148-amino-acid polypeptide reads, in one-letter code: 3-dehydroquinate dehydratase (148 aa).

Tyr26 acts as the Proton acceptor in catalysis. Substrate contacts are provided by Asn77, His83, and Asp90. His103 serves as the catalytic Proton donor. Residues 104-105 (LS) and Arg114 each bind substrate.

This sequence belongs to the type-II 3-dehydroquinase family. In terms of assembly, homododecamer.

It catalyses the reaction 3-dehydroquinate = 3-dehydroshikimate + H2O. Its pathway is metabolic intermediate biosynthesis; chorismate biosynthesis; chorismate from D-erythrose 4-phosphate and phosphoenolpyruvate: step 3/7. In terms of biological role, catalyzes a trans-dehydration via an enolate intermediate. The polypeptide is 3-dehydroquinate dehydratase (aroQ) (Pasteurella multocida (strain Pm70)).